The primary structure comprises 438 residues: Aspartate--tRNA(Asp/Asn) ligase (438 aa).

An L-aspartate-binding site is contributed by E176. The tract at residues 198 to 201 is aspartate; sequence QLYK. R220 contributes to the L-aspartate binding site. ATP-binding positions include 220 to 222, 228 to 230, and E361; these read RAE and RHL. 2 residues coordinate Mg(2+): E361 and S364. Residues S364 and R368 each contribute to the L-aspartate site. Position 409–412 (409–412) interacts with ATP; it reads GADR.

The protein belongs to the class-II aminoacyl-tRNA synthetase family. Type 2 subfamily. Homodimer. It depends on Mg(2+) as a cofactor.

The protein localises to the cytoplasm. The catalysed reaction is tRNA(Asx) + L-aspartate + ATP = L-aspartyl-tRNA(Asx) + AMP + diphosphate. Aspartyl-tRNA synthetase with relaxed tRNA specificity since it is able to aspartylate not only its cognate tRNA(Asp) but also tRNA(Asn). Reaction proceeds in two steps: L-aspartate is first activated by ATP to form Asp-AMP and then transferred to the acceptor end of tRNA(Asp/Asn). This is Aspartate--tRNA(Asp/Asn) ligase from Methanocaldococcus jannaschii (strain ATCC 43067 / DSM 2661 / JAL-1 / JCM 10045 / NBRC 100440) (Methanococcus jannaschii).